A 407-amino-acid chain; its full sequence is MTANTSRSTVLTGIGTLVTNDPTVGEGPLGLIRDAAVVFDGGVVAWVGSADSAPAGDVGHDLDGRAVLPGFVESHSHLVFGGERAEEFAARMAGQPYAAGGIRNTIEATRNATDEQLQANTRRLLDESLRSGSTTVECKTGYGQTVAHELRSTRIAASLTDEVTLLAAHVPPPEYAGRADDYVAMVCSEMIDACAPQAKWIDVFCETGAFDRDQAHAVLTAGMAKGLIPRVHGNQLREGPGVQLAVELGAASVDHVCYTTQADIDALAQSSTVATLLPGADFSTRNKYPDARALLDAGVTVALGADCNPGTSYTTSLPFCIAIAVRDMHMTPDEAIWAATAGGARALQRADVGVLRPGARADVLALDAPSYLHLAYRPGVPLVSDVWRGGELAWSAHTGHEKARALR.

Fe(3+)-binding residues include H75 and H77. 2 residues coordinate Zn(2+): H75 and H77. 4-imidazolone-5-propanoate contacts are provided by R84, Y142, and H169. Y142 is an N-formimidoyl-L-glutamate binding site. Residue H232 participates in Fe(3+) binding. H232 contributes to the Zn(2+) binding site. 4-imidazolone-5-propanoate is bound at residue Q235. D306 is a Fe(3+) binding site. Position 306 (D306) interacts with Zn(2+). 2 residues coordinate N-formimidoyl-L-glutamate: N308 and G310. T311 lines the 4-imidazolone-5-propanoate pocket.

This sequence belongs to the metallo-dependent hydrolases superfamily. HutI family. Requires Zn(2+) as cofactor. It depends on Fe(3+) as a cofactor.

Its subcellular location is the cytoplasm. The enzyme catalyses 4-imidazolone-5-propanoate + H2O = N-formimidoyl-L-glutamate. It functions in the pathway amino-acid degradation; L-histidine degradation into L-glutamate; N-formimidoyl-L-glutamate from L-histidine: step 3/3. Catalyzes the hydrolytic cleavage of the carbon-nitrogen bond in imidazolone-5-propanoate to yield N-formimidoyl-L-glutamate. It is the third step in the universal histidine degradation pathway. This chain is Imidazolonepropionase, found in Rhodococcus jostii (strain RHA1).